We begin with the raw amino-acid sequence, 358 residues long: DNA ligase C (358 aa).

Residue lysine 29 is the N6-AMP-lysine intermediate of the active site.

This sequence belongs to the ATP-dependent DNA ligase family. The cofactor is a divalent metal cation.

It catalyses the reaction ATP + (deoxyribonucleotide)n-3'-hydroxyl + 5'-phospho-(deoxyribonucleotide)m = (deoxyribonucleotide)n+m + AMP + diphosphate.. Its function is as follows. DNA ligase that seals nicks in double-stranded DNA during DNA replication, DNA recombination and DNA repair. The sequence is that of DNA ligase C (ligC) from Mycobacterium tuberculosis (strain ATCC 25618 / H37Rv).